We begin with the raw amino-acid sequence, 760 residues long: RxLR effector protein PSR2 (760 aa).

The first 21 residues, 1–21 (MGCRYAVLALAVAYFAGSIAA), serve as a signal peptide directing secretion. The RxLR-dEER motif lies at 47-62 (RFLRAANTADERNEDR). The stretch at 87–134 (PLLSWFEKKKSPDYVFLKLKINKGKQQLFDHPDWNVWVQYTTSVVKSD) is one WY1 repeat. The segment at 87–760 (PLLSWFEKKK…TTKYMERYGQ (674 aa)) is 7 X 93 AA tandem repeats. The stretch at 135–221 (PEEAMIAALR…MKLYNSKPVN (87 aa)) is one LWY2 repeat. The stretch at 222–312 (KKQQVTLVSM…KYVDNYNRDF (91 aa)) is one LWY3 repeat. Residues 313-403 (PDEATTVMAT…KYVEDLNLKP (91 aa)) form an LWY4 repeat. The LWY5 repeat unit spans residues 404 to 496 (EHNDLQVSII…KFLEHYYKSF (93 aa)). The LWY6 repeat unit spans residues 497 to 584 (PTPMMSALAK…RYLDEFNKKF (88 aa)). The LWY7 repeat unit spans residues 585–760 (PDEKVSMTDT…TTKYMERYGQ (176 aa)).

It belongs to the RxLR effector family. In terms of assembly, interacts with host dsRNA-binding protein DRB4.

It is found in the secreted. It localises to the host cell. Its function is as follows. Secreted effector that possesses RNA silencing suppression activity by inhibiting the biogenesis of small RNAs in the host plant to promote enhanced susceptibility of host to the pathogen during infection. Interferes with secondary siRNA production by associating with host dsRNA-binding protein DRB4. Inhibits the host salicylic acid pathway during infection. This chain is RxLR effector protein PSR2, found in Phytophthora infestans (strain T30-4) (Potato late blight agent).